The following is a 128-amino-acid chain: Ribonuclease pancreatic (128 aa).

A compositionally biased stretch (basic and acidic residues) spans 1–13 (KESPAMKFERQHM). The segment at 1 to 26 (KESPAMKFERQHMDSGSTSSSNPTYC) is disordered. Positions 7 and 10 each coordinate substrate. The active-site Proton acceptor is His12. A compositionally biased stretch (polar residues) spans 14–26 (DSGSTSSSNPTYC). 4 disulfides stabilise this stretch: Cys26-Cys84, Cys40-Cys95, Cys58-Cys110, and Cys65-Cys72. Asn34 carries N-linked (GlcNAc...) asparagine glycosylation. 41–45 (KPVNT) contacts substrate. The N-linked (GlcNAc...) asparagine glycan is linked to Asn62. Residues Lys66 and Arg85 each contribute to the substrate site. Catalysis depends on His119, which acts as the Proton donor.

Belongs to the pancreatic ribonuclease family. As to quaternary structure, monomer. Interacts with and forms tight 1:1 complexes with RNH1. Dimerization of two such complexes may occur. Interaction with RNH1 inhibits this protein. Pancreas.

Its subcellular location is the secreted. It catalyses the reaction an [RNA] containing cytidine + H2O = an [RNA]-3'-cytidine-3'-phosphate + a 5'-hydroxy-ribonucleotide-3'-[RNA].. The catalysed reaction is an [RNA] containing uridine + H2O = an [RNA]-3'-uridine-3'-phosphate + a 5'-hydroxy-ribonucleotide-3'-[RNA].. Functionally, endonuclease that catalyzes the cleavage of RNA on the 3' side of pyrimidine nucleotides. Acts on single-stranded and double-stranded RNA. This Equus caballus (Horse) protein is Ribonuclease pancreatic (RNASE1).